Reading from the N-terminus, the 254-residue chain is Glutamate racemase (254 aa).

Substrate is bound by residues 10 to 11 (DS) and 42 to 43 (YG). The Proton donor/acceptor role is filled by cysteine 73. Position 74 to 75 (74 to 75 (NT)) interacts with substrate. Catalysis depends on cysteine 183, which acts as the Proton donor/acceptor. Residue 184–185 (TH) coordinates substrate.

It belongs to the aspartate/glutamate racemases family.

It carries out the reaction L-glutamate = D-glutamate. The protein operates within cell wall biogenesis; peptidoglycan biosynthesis. Provides the (R)-glutamate required for cell wall biosynthesis. This is Glutamate racemase from Herpetosiphon aurantiacus (strain ATCC 23779 / DSM 785 / 114-95).